The primary structure comprises 318 residues: MHRLRAAEHPRPDYVLLHISDTHLIGGDRRLYGAVDADDRLGELLEQLNQSGLRPDAIVFTGDLADKGEPAAYRKLRGLVEPFAAQLGAELVWVMGNHDDRAELRKFLLDEAPSMAPLDRVCMIDGLRIIVLDTSVPGHHHGEIRASQLGWLAEELATPAPDGTILALHHPPIPSVLDMAVTVELRDQAALGRVLRGTDVRAILAGHLHYSTNATFVGIPVSVASATCYTQDLTVAAGGTRGRDGAQGCNLVHVYPDTVVHSVIPLGGGETVGTFVSPGQARRKIAESGIFIEPSRRDSLFKHPPMVLTSSAPRSPVD.

Fe cation is bound by residues Asp-21, His-23, and Asp-63. AMP-binding positions include His-23, Asp-63, and 97–98 (NH). Residues Asp-63, Asn-97, His-169, and His-207 each coordinate Mn(2+). Residue His-209 participates in Fe cation binding. Position 209 (His-209) interacts with AMP. A C-terminal extension region spans residues 278–318 (PGQARRKIAESGIFIEPSRRDSLFKHPPMVLTSSAPRSPVD).

Belongs to the cyclic nucleotide phosphodiesterase class-III family. Homodimer. Requires Fe(3+) as cofactor. Mn(2+) is required as a cofactor.

It is found in the cytoplasm. The protein resides in the cell membrane. It localises to the secreted. Its subcellular location is the cell wall. The protein localises to the cell envelope. The catalysed reaction is a nucleoside 2',3'-cyclic phosphate + H2O = a nucleoside 3'-phosphate + H(+). It carries out the reaction 2',3'-cyclophospho-AMP + H2O = 3'-AMP + H(+). The enzyme catalyses 2',3'-cyclophospho-GMP + H2O = 3'-GMP + H(+). It catalyses the reaction a nucleoside 3',5'-cyclic phosphate + H2O = a nucleoside 5'-phosphate + H(+). The catalysed reaction is 3',5'-cyclic AMP + H2O = AMP + H(+). It carries out the reaction 3',5'-cyclic GMP + H2O = GMP + H(+). Functionally, cyclic nucleotide phosphodiesterase with a dual-specificity for the second messengers cAMP and cGMP. The protein is cAMP/cGMP dual specificity phosphodiesterase MT0825 of Mycobacterium tuberculosis (strain CDC 1551 / Oshkosh).